A 382-amino-acid chain; its full sequence is tRNA-specific 2-thiouridylase MnmA (382 aa).

ATP is bound by residues 34–41 (AMSGGVDS) and Leu60. The active-site Nucleophile is the Cys128. A disulfide bridge links Cys128 with Cys224. Gly152 lines the ATP pocket. Residues 174 to 176 (RDQ) are interaction with tRNA. Cys224 (cysteine persulfide intermediate) is an active-site residue.

This sequence belongs to the MnmA/TRMU family.

The protein resides in the cytoplasm. The catalysed reaction is S-sulfanyl-L-cysteinyl-[protein] + uridine(34) in tRNA + AH2 + ATP = 2-thiouridine(34) in tRNA + L-cysteinyl-[protein] + A + AMP + diphosphate + H(+). Its function is as follows. Catalyzes the 2-thiolation of uridine at the wobble position (U34) of tRNA, leading to the formation of s(2)U34. The protein is tRNA-specific 2-thiouridylase MnmA of Sphingopyxis alaskensis (strain DSM 13593 / LMG 18877 / RB2256) (Sphingomonas alaskensis).